The sequence spans 265 residues: Hydroxyethylthiazole kinase (265 aa).

Met-43 provides a ligand contact to substrate. Residues Lys-118 and Thr-165 each contribute to the ATP site. Gly-192 provides a ligand contact to substrate.

Belongs to the Thz kinase family. Mg(2+) serves as cofactor.

It carries out the reaction 5-(2-hydroxyethyl)-4-methylthiazole + ATP = 4-methyl-5-(2-phosphooxyethyl)-thiazole + ADP + H(+). It participates in cofactor biosynthesis; thiamine diphosphate biosynthesis; 4-methyl-5-(2-phosphoethyl)-thiazole from 5-(2-hydroxyethyl)-4-methylthiazole: step 1/1. Functionally, catalyzes the phosphorylation of the hydroxyl group of 4-methyl-5-beta-hydroxyethylthiazole (THZ). The polypeptide is Hydroxyethylthiazole kinase (Pyrococcus horikoshii (strain ATCC 700860 / DSM 12428 / JCM 9974 / NBRC 100139 / OT-3)).